Consider the following 488-residue polypeptide: Cytochrome P450 71A24 (488 aa).

A helical membrane pass occupies residues 3-23 (MMMMIILLLCSIILITILFFK). Residue cysteine 433 participates in heme binding.

This sequence belongs to the cytochrome P450 family. The cofactor is heme.

The protein resides in the membrane. In Arabidopsis thaliana (Mouse-ear cress), this protein is Cytochrome P450 71A24 (CYP71A24).